The sequence spans 104 residues: Interferon alpha-inducible protein 27-like protein 1 (104 aa).

3 consecutive transmembrane segments (helical) span residues 14–34 (VAAV…LSAM), 59–79 (GGGV…AAGL), and 81–101 (VTSK…LGSP).

The protein belongs to the IFI6/IFI27 family.

Its subcellular location is the membrane. Its function is as follows. Plays a role in the apoptotic process and has a pro-apoptotic activity. The polypeptide is Interferon alpha-inducible protein 27-like protein 1 (Homo sapiens (Human)).